A 391-amino-acid chain; its full sequence is Phosphoglycerate kinase (391 aa).

Substrate-binding positions include 21 to 23 (DFN), arginine 41, 64 to 67 (HLGR), arginine 121, and arginine 154. Residues lysine 205, glutamate 322, and 348 to 351 (GGDS) each bind ATP.

It belongs to the phosphoglycerate kinase family. Monomer.

The protein localises to the cytoplasm. The catalysed reaction is (2R)-3-phosphoglycerate + ATP = (2R)-3-phospho-glyceroyl phosphate + ADP. It functions in the pathway carbohydrate degradation; glycolysis; pyruvate from D-glyceraldehyde 3-phosphate: step 2/5. In Solibacter usitatus (strain Ellin6076), this protein is Phosphoglycerate kinase.